Reading from the N-terminus, the 244-residue chain is U11/U12 small nuclear ribonucleoprotein 35 kDa protein (244 aa).

The RRM domain occupies 51-129 (LTLFVARLNS…HEIFVDYELE (79 aa)). The segment covering 146-162 (GKKESGQLRFGGRDRPF) has biased composition (basic and acidic residues). Residues 146-244 (GKKESGQLRF…KTRDKRDRSK (99 aa)) are disordered. Residue Lys-172 forms a Glycyl lysine isopeptide (Lys-Gly) (interchain with G-Cter in SUMO2) linkage. Composition is skewed to basic and acidic residues over residues 173 to 185 (NEPHREGKRERRE) and 192 to 244 (RHWD…DRSK).

Component of the U11/U12 snRNPs that are part of the U12-type spliceosome.

Its subcellular location is the nucleus. This chain is U11/U12 small nuclear ribonucleoprotein 35 kDa protein (Snrnp35), found in Rattus norvegicus (Rat).